A 92-amino-acid polypeptide reads, in one-letter code: Conotoxin Mr15.3 (92 aa).

Positions 1–20 (MSTLKMMLLILLLLLPMATF) are cleaved as a signal peptide. Residues 21–53 (DSDGQAIPGGGIPSAVNSRVRGDEKSGRSLEKR) constitute a propeptide that is removed on maturation.

It belongs to the conotoxin N superfamily. Contains 4 disulfide bonds. Expressed by the venom duct.

It localises to the secreted. The chain is Conotoxin Mr15.3 from Conus marmoreus (Marble cone).